A 452-amino-acid polypeptide reads, in one-letter code: MEQYDQIGARLDRLPLARFHYRIFGIISFSLLLTGFLSYSGNVVLAKLVSNGWSNNFLNAAFTSALMFGYFIGSLTGGFIGDYFGRRRAFRINLLIVGIAATGAAFVPDMYWLIFFRFLMGTGMGALIMVGYASFTEFIPATVRGKWSARLSFVGNWSPMLSAAIGVVVIAFFSWRIMFLLGGIGILLAWFLSGKYFIESPRWLAGKGQIAGAECQLREVEQQIEREKSIRLPPLTSYQSNSKVKVIKGTFWLLFKGEMLRRTLVAITVLIAMNISLYTITVWIPTIFVNSGIDVDKSILMTAVIMIGAPVGIFIAALIIDHFPRRLFGSTLLIIIAVLGYIYSIQTTEWAILIYGLVMIFFLYMYVCFASAVYIPELWPTHLRLRGSGFVNAVGRIVAVFTPYGVAALLTHYGSITVFMVLGVMLLLCALVLSIFGIETRKVSLEEISEVN.

Over 1–20 (MEQYDQIGARLDRLPLARFH) the chain is Cytoplasmic. Residues 21 to 43 (YRIFGIISFSLLLTGFLSYSGNV) traverse the membrane as a helical segment. Residues 44–57 (VLAKLVSNGWSNNF) lie on the Periplasmic side of the membrane. The helical transmembrane segment at 58–80 (LNAAFTSALMFGYFIGSLTGGFI) threads the bilayer. At 81-91 (GDYFGRRRAFR) the chain is on the cytoplasmic side. Residues 92 to 114 (INLLIVGIAATGAAFVPDMYWLI) traverse the membrane as a helical segment. The Periplasmic segment spans residues 115-117 (FFR). Residues 118 to 140 (FLMGTGMGALIMVGYASFTEFIP) traverse the membrane as a helical segment. Over 141 to 152 (ATVRGKWSARLS) the chain is Cytoplasmic. The chain crosses the membrane as a helical span at residues 153-175 (FVGNWSPMLSAAIGVVVIAFFSW). Over 176–178 (RIM) the chain is Periplasmic. A helical membrane pass occupies residues 179–198 (FLLGGIGILLAWFLSGKYFI). Topologically, residues 199–265 (ESPRWLAGKG…KGEMLRRTLV (67 aa)) are cytoplasmic. Residues 266–288 (AITVLIAMNISLYTITVWIPTIF) form a helical membrane-spanning segment. The Periplasmic portion of the chain corresponds to 289-297 (VNSGIDVDK). The chain crosses the membrane as a helical span at residues 298 to 320 (SILMTAVIMIGAPVGIFIAALII). Topologically, residues 321–326 (DHFPRR) are cytoplasmic. A helical membrane pass occupies residues 327–344 (LFGSTLLIIIAVLGYIYS). The Periplasmic portion of the chain corresponds to 345–353 (IQTTEWAIL). A helical transmembrane segment spans residues 354–376 (IYGLVMIFFLYMYVCFASAVYIP). Over 377 to 388 (ELWPTHLRLRGS) the chain is Cytoplasmic. A helical membrane pass occupies residues 389-411 (GFVNAVGRIVAVFTPYGVAALLT). Residues 412-415 (HYGS) lie on the Periplasmic side of the membrane. The chain crosses the membrane as a helical span at residues 416–438 (ITVFMVLGVMLLLCALVLSIFGI). The Cytoplasmic portion of the chain corresponds to 439 to 452 (ETRKVSLEEISEVN).

This sequence belongs to the major facilitator superfamily. Sugar transporter (TC 2.A.1.1) family.

Its subcellular location is the cell inner membrane. The sequence is that of Inner membrane metabolite transport protein YdjE (ydjE) from Escherichia coli (strain K12).